A 527-amino-acid chain; its full sequence is MQNHNRQEVDKRRTFAIISHPDAGKTTITEKLLLFGGAIQQAGEVRARKSARHATSDWMELEKQRGISVTSSVMKFTYNGCEINLLDTPGHNDFSEDTYRVLTAVDSVLMVIDSVKGVESQTKKLLEVCRLRHTPIITFMNKLDREGQEPLDLLDDIEKNLKMQTAPVTWPVGMGKRFRGTYHLYTKELIFFDAEAANGTGRILTIAGLNDPLLDELLGSQVDELRHDVELLEGAANPFDKEAYLAGQQTPVFFGSAINTFGVQQLLDAFIEYAPAPLPRETTTRVVSPYEEPFSGFTFKIQANMDPAHRDRIAFFRICSGKFTRGMKVRHTRLGREVQIANATIFMAQDRTNVEEAWPGDIIGIHNHGTIKIGDTFTQGEELKFTGIPSFAPEHFRKVRLLNPLKSKALEKGLIQLAEEGATQVFKPLMGADWVIGAVGLLQFEVVMHRLEFEYSVKVAFEPVSYVTARWVTGERKKVEEFEKREAMHVYIDGEGKLTYMAGSQWRLDNTIESWKELSFHETSEHS.

The tr-type G domain maps to 10 to 278 (DKRRTFAIIS…AFIEYAPAPL (269 aa)). Residues 19 to 26 (SHPDAGKT), 87 to 91 (DTPGH), and 141 to 144 (NKLD) each bind GTP.

It belongs to the TRAFAC class translation factor GTPase superfamily. Classic translation factor GTPase family. PrfC subfamily.

It is found in the cytoplasm. Functionally, increases the formation of ribosomal termination complexes and stimulates activities of RF-1 and RF-2. It binds guanine nucleotides and has strong preference for UGA stop codons. It may interact directly with the ribosome. The stimulation of RF-1 and RF-2 is significantly reduced by GTP and GDP, but not by GMP. This Pelobacter propionicus (strain DSM 2379 / NBRC 103807 / OttBd1) protein is Peptide chain release factor 3.